A 398-amino-acid polypeptide reads, in one-letter code: uncharacterized protein (398 aa).

Lysine 212 is subject to N6-(pyridoxal phosphate)lysine.

This sequence belongs to the trans-sulfuration enzymes family. Pyridoxal 5'-phosphate serves as cofactor.

This is an uncharacterized protein from Schizosaccharomyces pombe (strain 972 / ATCC 24843) (Fission yeast).